Reading from the N-terminus, the 265-residue chain is 6-oxopurine nucleoside phosphorylase (265 aa).

Residues S10, 49-50 (RH), and 82-83 (SA) contribute to the phosphate site. Disulfide bonds link C136/C202 and C162/C190. A substrate-binding site is contributed by M187. T188 contributes to the phosphate binding site. Position 211-213 (211-213 (NYA)) interacts with substrate. An intrachain disulfide couples C254 to C256.

It belongs to the PNP/MTAP phosphorylase family. MTAP subfamily. As to quaternary structure, homohexamer. Dimer of a homotrimer.

The catalysed reaction is a purine D-ribonucleoside + phosphate = a purine nucleobase + alpha-D-ribose 1-phosphate. It carries out the reaction guanosine + phosphate = alpha-D-ribose 1-phosphate + guanine. It catalyses the reaction inosine + phosphate = alpha-D-ribose 1-phosphate + hypoxanthine. Its pathway is purine metabolism; purine nucleoside salvage. In terms of biological role, purine nucleoside phosphorylase which is highly specific for 6-oxopurine nucleosides. Cleaves guanosine or inosine to respective bases and sugar-1-phosphate molecules. Involved in purine salvage. This chain is 6-oxopurine nucleoside phosphorylase, found in Pyrococcus furiosus (strain ATCC 43587 / DSM 3638 / JCM 8422 / Vc1).